Here is a 395-residue protein sequence, read N- to C-terminus: MFNYKILEDEMENLKNEGLYINIRTLESPQGAWIVVNGKRVLNLCSNNYLGFASDERLKQAAKKAIDEWGVGPGAVRTIAGTMKIHEELEKALAEFKGADATIFLQSGFIANQAAIPTVFGDENDAIISDELNHASIIDGVRLSKAKRYVYKHNDMNELEARLKEARDVQKARRILIITDGVFSMDGDIAPLPEIVELAEKYEAAVMVDDAHGEGVLGRGGRGIVDHFGLHGRVDMEIGTLSKAFGVLGGYIAGKETLIRYLKQKARPFLFSTGLTPADVAACLEAVKILQESDERVKRLWDNANYFKSEMKKLGFDLGVSQTPITPVMLYDAKVASQFSRELFEEGIFAQSIGYPTVPKGKARIRVMISAVHTKEDLDFALDKFEKVGKKFAII.

108-109 (GF) is a binding site for pyridoxal 5'-phosphate. Residue His-134 coordinates substrate. Pyridoxal 5'-phosphate is bound by residues Ser-184, 209–212 (DDAH), and 240–243 (TLSK). Residue Lys-243 is modified to N6-(pyridoxal phosphate)lysine. A substrate-binding site is contributed by Thr-357.

The protein belongs to the class-II pyridoxal-phosphate-dependent aminotransferase family. BioF subfamily. As to quaternary structure, homodimer. Pyridoxal 5'-phosphate serves as cofactor.

The catalysed reaction is 6-carboxyhexanoyl-[ACP] + L-alanine + H(+) = (8S)-8-amino-7-oxononanoate + holo-[ACP] + CO2. It participates in cofactor biosynthesis; biotin biosynthesis. Functionally, catalyzes the decarboxylative condensation of pimeloyl-[acyl-carrier protein] and L-alanine to produce 8-amino-7-oxononanoate (AON), [acyl-carrier protein], and carbon dioxide. This Fervidobacterium nodosum (strain ATCC 35602 / DSM 5306 / Rt17-B1) protein is 8-amino-7-oxononanoate synthase.